The primary structure comprises 589 residues: Type I restriction enzyme EcoAI specificity subunit (589 aa).

It belongs to the type-I restriction system S methylase family. The type I restriction/modification system is composed of three polypeptides R, M and S. The restriction enzyme has stoichiometry R(2)M(2)S(1) while the methyltransferase is M(2)S(1).

In terms of biological role, the specificity (S) subunit of a type I restriction enzyme; this subunit dictates DNA sequence specificity. The M and S subunits together form a methyltransferase (MTase) that methylates A-2 on the top strand and A-3 on the bottom strand of the sequence 5'-GAGN(7)GTCA-3'. In the presence of the R subunit the complex can also act as an endonuclease, binding to the same target sequence but cutting the DNA some distance from this site. Whether the DNA is cut or modified depends on the methylation state of the target sequence. When the target site is unmodified, the DNA is cut. When the target site is hemimethylated, the complex acts as a maintenance MTase modifying the DNA so that both strands become methylated. After locating a non-methylated recognition site, the enzyme complex serves as a molecular motor that translocates DNA in an ATP-dependent manner until a collision occurs that triggers cleavage. The protein is Type I restriction enzyme EcoAI specificity subunit of Escherichia coli.